Reading from the N-terminus, the 350-residue chain is Anthranilate phosphoribosyltransferase (350 aa).

5-phospho-alpha-D-ribose 1-diphosphate-binding positions include Gly94, Gly97–Ser98, Thr102, Asn104–Thr107, Lys122–Ser130, and Ser134. Anthranilate is bound at residue Gly94. Mg(2+) is bound at residue Ser106. An anthranilate-binding site is contributed by Asn125. Residue Arg180 participates in anthranilate binding. 2 residues coordinate Mg(2+): Asp239 and Glu240.

The protein belongs to the anthranilate phosphoribosyltransferase family. In terms of assembly, homodimer. It depends on Mg(2+) as a cofactor.

It carries out the reaction N-(5-phospho-beta-D-ribosyl)anthranilate + diphosphate = 5-phospho-alpha-D-ribose 1-diphosphate + anthranilate. Its pathway is amino-acid biosynthesis; L-tryptophan biosynthesis; L-tryptophan from chorismate: step 2/5. Functionally, catalyzes the transfer of the phosphoribosyl group of 5-phosphorylribose-1-pyrophosphate (PRPP) to anthranilate to yield N-(5'-phosphoribosyl)-anthranilate (PRA). This is Anthranilate phosphoribosyltransferase from Geotalea uraniireducens (strain Rf4) (Geobacter uraniireducens).